The primary structure comprises 292 residues: Malectin (292 aa).

Residues 1–28 (MLGAWAVEGTAVALLRLLLLLLPPAIRG) form the signal peptide. Topologically, residues 29-269 (PGLGVAGVAG…TPNPYASDNS (241 aa)) are lumenal. The a carbohydrate site is built by Tyr82, Tyr104, Tyr131, Phe132, and Asp201. The tract at residues 221 to 265 (LQPHPGLEKKEEEEEEEEYDEGSNLKKQTNKNRVQSGPRTPNPYA) is disordered. Positions 231–241 (EEEEEEEEYDE) are enriched in acidic residues. Residues 245 to 265 (LKKQTNKNRVQSGPRTPNPYA) show a composition bias toward polar residues. Asn268 carries an N-linked (GlcNAc...) asparagine glycan. Residues 270–290 (SLMFPILVAFGVFIPTLFCLC) traverse the membrane as a helical segment. The Cytoplasmic portion of the chain corresponds to 291 to 292 (RL).

The protein belongs to the malectin family. In terms of assembly, interacts with the oligosaccharyltransferase (OST) complex.

The protein localises to the endoplasmic reticulum membrane. Functionally, carbohydrate-binding protein with a strong ligand preference for Glc2-N-glycan. May play a role in the early steps of protein N-glycosylation. The sequence is that of Malectin from Homo sapiens (Human).